Here is a 145-residue protein sequence, read N- to C-terminus: MAKADKKPAEKKPAEKTPAAEPAAAAEKKPKAGKKLPKEPAGAGDKKKKRSKKNVETYKIYIFKVLKQVHPDIGISSKAMGIMNSFINDIFEKLAGESSKLARYNKKPTITSREIQTAVRLVLPGELAKHAVSEGTKAVTKFTSS.

Basic and acidic residues predominate over residues 1–15 (MAKADKKPAEKKPAE). Residues 1-53 (MAKADKKPAEKKPAEKTPAAEPAAAAEKKPKAGKKLPKEPAGAGDKKKKRSKK) are disordered. N6-methyllysine is present on Lys3. Lys6 and Lys11 each carry N6-acetyllysine. The residue at position 12 (Lys12) is an N6,N6-dimethyllysine. Residues Lys16, Lys28, and Lys34 each carry the N6-acetyllysine modification. Residues 16-25 (KTPAAEPAAA) are compositionally biased toward low complexity. At Lys35 the chain carries N6-acetyllysine; partial. Lys141 is covalently cross-linked (Glycyl lysine isopeptide (Lys-Gly) (interchain with G-Cter in ubiquitin)).

It belongs to the histone H2B family. In terms of assembly, the nucleosome is a histone octamer containing two molecules each of H2A, H2B, H3 and H4 assembled in one H3-H4 heterotetramer and two H2A-H2B heterodimers. The octamer wraps approximately 147 bp of DNA. Interacts with ORTH2. In terms of processing, can be acetylated to form H2BK5ac, H2BK10ac, H2BK15ac, H2BK27ac, H2BK33ac and H2BK34ac. Dimethylated to form H2BK11me2. Post-translationally, monoubiquitinated by BRE1 to form H2BK143ub1 and deubiquitinated by UBP26. Required for heterochromatic histone H3 di- and trimethylation at H3K4me. May give a specific tag for epigenetic transcriptional activation.

The protein localises to the nucleus. It localises to the chromosome. Functionally, core component of nucleosome. Nucleosomes wrap and compact DNA into chromatin, limiting DNA accessibility to the cellular machineries which require DNA as a template. Histones thereby play a central role in transcription regulation, DNA repair, DNA replication and chromosomal stability. DNA accessibility is regulated via a complex set of post-translational modifications of histones, also called histone code, and nucleosome remodeling. The sequence is that of Histone H2B.10 from Arabidopsis thaliana (Mouse-ear cress).